Reading from the N-terminus, the 343-residue chain is MTVVNLAYIPSPPQGVWHLGPIPIRAYALCIIAGIVAALIIGDRRWEQRGGERGVIYDIALWAVPFGLVGGRLYHVMTDWQTYFGAHGKGIGKAIAVWEGGLGIWGAVALGGVGAWIACRRRGIPLPAFADAIAPGIVLAQAIGRLGNYFNQELTGGPTTLPWGLELFYRRSADGTVDVLNLNGVSTGEVAQVVHPTFLYELLWNVLVFVLLIVVDRRFKIGHGRLFAMYVAAYCVGRFCVELMRVDPATQFGGIRVNSFTSTLVFVGAVAYILLAPKGREDPATLGGTPSSADGGDDTAETEATADTEDTEDTEDGVTDAPEADATDKSVDESADNSGIVEK.

Helical transmembrane passes span 22-42, 54-74, 97-117, and 123-143; these read IPIRAYALCIIAGIVAALIIG, GVIYDIALWAVPFGLVGGRLY, VWEGGLGIWGAVALGGVGAWI, and GIPLPAFADAIAPGIVLAQAI. Arg-145 is an a 1,2-diacyl-sn-glycero-3-phospho-(1'-sn-glycerol) binding site. Helical transmembrane passes span 193-213 and 257-277; these read VVHPTFLYELLWNVLVFVLLI and VNSFTSTLVFVGAVAYILLAP. A disordered region spans residues 283–343; that stretch reads PATLGGTPSS…SADNSGIVEK (61 aa). Over residues 295 to 325 the composition is skewed to acidic residues; the sequence is GGDDTAETEATADTEDTEDTEDGVTDAPEAD.

Belongs to the Lgt family.

It localises to the cell membrane. It catalyses the reaction L-cysteinyl-[prolipoprotein] + a 1,2-diacyl-sn-glycero-3-phospho-(1'-sn-glycerol) = an S-1,2-diacyl-sn-glyceryl-L-cysteinyl-[prolipoprotein] + sn-glycerol 1-phosphate + H(+). Its pathway is protein modification; lipoprotein biosynthesis (diacylglyceryl transfer). In terms of biological role, catalyzes the transfer of the diacylglyceryl group from phosphatidylglycerol to the sulfhydryl group of the N-terminal cysteine of a prolipoprotein, the first step in the formation of mature lipoproteins. This is Phosphatidylglycerol--prolipoprotein diacylglyceryl transferase from Mycobacteroides abscessus (strain ATCC 19977 / DSM 44196 / CCUG 20993 / CIP 104536 / JCM 13569 / NCTC 13031 / TMC 1543 / L948) (Mycobacterium abscessus).